We begin with the raw amino-acid sequence, 426 residues long: Serine hydroxymethyltransferase (426 aa).

Residues Leu-113 and 117 to 119 (GHL) contribute to the (6S)-5,6,7,8-tetrahydrofolate site. The residue at position 222 (Lys-222) is an N6-(pyridoxal phosphate)lysine. Position 363–365 (363–365 (SPF)) interacts with (6S)-5,6,7,8-tetrahydrofolate.

This sequence belongs to the SHMT family. In terms of assembly, homodimer. The cofactor is pyridoxal 5'-phosphate.

Its subcellular location is the cytoplasm. It carries out the reaction (6R)-5,10-methylene-5,6,7,8-tetrahydrofolate + glycine + H2O = (6S)-5,6,7,8-tetrahydrofolate + L-serine. Its pathway is one-carbon metabolism; tetrahydrofolate interconversion. It functions in the pathway amino-acid biosynthesis; glycine biosynthesis; glycine from L-serine: step 1/1. Catalyzes the reversible interconversion of serine and glycine with tetrahydrofolate (THF) serving as the one-carbon carrier. This reaction serves as the major source of one-carbon groups required for the biosynthesis of purines, thymidylate, methionine, and other important biomolecules. Also exhibits THF-independent aldolase activity toward beta-hydroxyamino acids, producing glycine and aldehydes, via a retro-aldol mechanism. In Azobacteroides pseudotrichonymphae genomovar. CFP2, this protein is Serine hydroxymethyltransferase.